Reading from the N-terminus, the 158-residue chain is NADH-quinone oxidoreductase subunit B (158 aa).

[4Fe-4S] cluster is bound by residues C37, C38, C102, and C132.

This sequence belongs to the complex I 20 kDa subunit family. As to quaternary structure, NDH-1 is composed of 14 different subunits. Subunits NuoB, C, D, E, F, and G constitute the peripheral sector of the complex. It depends on [4Fe-4S] cluster as a cofactor.

Its subcellular location is the cell inner membrane. The enzyme catalyses a quinone + NADH + 5 H(+)(in) = a quinol + NAD(+) + 4 H(+)(out). Its function is as follows. NDH-1 shuttles electrons from NADH, via FMN and iron-sulfur (Fe-S) centers, to quinones in the respiratory chain. Couples the redox reaction to proton translocation (for every two electrons transferred, four hydrogen ions are translocated across the cytoplasmic membrane), and thus conserves the redox energy in a proton gradient. In Methylobacillus flagellatus (strain ATCC 51484 / DSM 6875 / VKM B-1610 / KT), this protein is NADH-quinone oxidoreductase subunit B.